Consider the following 95-residue polypeptide: Protein TusB (95 aa).

It belongs to the DsrH/TusB family. As to quaternary structure, heterohexamer, formed by a dimer of trimers. The hexameric TusBCD complex contains 2 copies each of TusB, TusC and TusD. The TusBCD complex interacts with TusE.

It is found in the cytoplasm. Functionally, part of a sulfur-relay system required for 2-thiolation of 5-methylaminomethyl-2-thiouridine (mnm(5)s(2)U) at tRNA wobble positions. This is Protein TusB from Buchnera aphidicola subsp. Baizongia pistaciae (strain Bp).